Consider the following 146-residue polypeptide: Large ribosomal subunit protein uL15 (146 aa).

Residues 1-54 (MKLHELKPAAGSRKAPKRVGRGTGSGLGRNAGKGEKGQNARSGGGVRPGFEGGQ) form a disordered region. Gly residues-rich tracts occupy residues 21 to 31 (RGTGSGLGRNA) and 42 to 52 (SGGGVRPGFEG).

It belongs to the universal ribosomal protein uL15 family. Part of the 50S ribosomal subunit.

Binds to the 23S rRNA. The sequence is that of Large ribosomal subunit protein uL15 from Clostridium acetobutylicum (strain ATCC 824 / DSM 792 / JCM 1419 / IAM 19013 / LMG 5710 / NBRC 13948 / NRRL B-527 / VKM B-1787 / 2291 / W).